The chain runs to 264 residues: Thymidylate synthase (264 aa).

Arginine 21 serves as a coordination point for dUMP. Histidine 51 is a binding site for (6R)-5,10-methylene-5,6,7,8-tetrahydrofolate. DUMP is bound at residue 126–127 (RR). Catalysis depends on cysteine 146, which acts as the Nucleophile. DUMP contacts are provided by residues 166–169 (RSCD), asparagine 177, and 207–209 (HLY). Position 169 (aspartate 169) interacts with (6R)-5,10-methylene-5,6,7,8-tetrahydrofolate. Residue alanine 263 coordinates (6R)-5,10-methylene-5,6,7,8-tetrahydrofolate.

The protein belongs to the thymidylate synthase family. Bacterial-type ThyA subfamily. Homodimer.

Its subcellular location is the cytoplasm. It catalyses the reaction dUMP + (6R)-5,10-methylene-5,6,7,8-tetrahydrofolate = 7,8-dihydrofolate + dTMP. It functions in the pathway pyrimidine metabolism; dTTP biosynthesis. Functionally, catalyzes the reductive methylation of 2'-deoxyuridine-5'-monophosphate (dUMP) to 2'-deoxythymidine-5'-monophosphate (dTMP) while utilizing 5,10-methylenetetrahydrofolate (mTHF) as the methyl donor and reductant in the reaction, yielding dihydrofolate (DHF) as a by-product. This enzymatic reaction provides an intracellular de novo source of dTMP, an essential precursor for DNA biosynthesis. The polypeptide is Thymidylate synthase (Pectobacterium atrosepticum (strain SCRI 1043 / ATCC BAA-672) (Erwinia carotovora subsp. atroseptica)).